We begin with the raw amino-acid sequence, 164 residues long: Lipoprotein signal peptidase (164 aa).

Transmembrane regions (helical) follow at residues 12–32 (WLWLVVVVLIIDLGSKYLILQ), 70–90 (WFFAGIAIGISVILVVMMYRS), and 102–122 (ALIIGGALGNLFDRLWHGFVV). Catalysis depends on residues Asp-123 and Asp-141. Residues 137–157 (FNLADTAICVGAALIVLEGFL) traverse the membrane as a helical segment.

Belongs to the peptidase A8 family.

The protein localises to the cell inner membrane. It carries out the reaction Release of signal peptides from bacterial membrane prolipoproteins. Hydrolyzes -Xaa-Yaa-Zaa-|-(S,diacylglyceryl)Cys-, in which Xaa is hydrophobic (preferably Leu), and Yaa (Ala or Ser) and Zaa (Gly or Ala) have small, neutral side chains.. The protein operates within protein modification; lipoprotein biosynthesis (signal peptide cleavage). Its function is as follows. This protein specifically catalyzes the removal of signal peptides from prolipoproteins. The sequence is that of Lipoprotein signal peptidase from Escherichia coli O6:K15:H31 (strain 536 / UPEC).